The primary structure comprises 238 residues: ATP synthase subunit a (238 aa).

Transmembrane regions (helical) follow at residues 35–55, 61–81, 94–114, 128–148, 151–171, 190–210, and 211–231; these read SNVI…TLAT, VPSG…SFVV, FLCA…VPGL, ALTV…AGYI, FMGP…ISHL, IVLV…MYFL, and FSLA…IYLK.

The protein belongs to the ATPase A chain family. As to quaternary structure, F-type ATPases have 2 components, CF(1) - the catalytic core - and CF(0) - the membrane proton channel. CF(1) has five subunits: alpha(3), beta(3), gamma(1), delta(1), epsilon(1). CF(0) has three main subunits: a(1), b(2) and c(9-12). The alpha and beta chains form an alternating ring which encloses part of the gamma chain. CF(1) is attached to CF(0) by a central stalk formed by the gamma and epsilon chains, while a peripheral stalk is formed by the delta and b chains.

The protein localises to the cell inner membrane. Key component of the proton channel; it plays a direct role in the translocation of protons across the membrane. The chain is ATP synthase subunit a from Solidesulfovibrio magneticus (strain ATCC 700980 / DSM 13731 / RS-1) (Desulfovibrio magneticus).